The following is a 419-amino-acid chain: Serine hydroxymethyltransferase (419 aa).

(6S)-5,6,7,8-tetrahydrofolate-binding positions include leucine 121 and 125–127 (GHL). Lysine 230 carries the post-translational modification N6-(pyridoxal phosphate)lysine. Residues glutamate 246 and 355 to 357 (SPF) contribute to the (6S)-5,6,7,8-tetrahydrofolate site.

Belongs to the SHMT family. Homodimer. Pyridoxal 5'-phosphate serves as cofactor.

The protein localises to the cytoplasm. It carries out the reaction (6R)-5,10-methylene-5,6,7,8-tetrahydrofolate + glycine + H2O = (6S)-5,6,7,8-tetrahydrofolate + L-serine. Its pathway is one-carbon metabolism; tetrahydrofolate interconversion. It functions in the pathway amino-acid biosynthesis; glycine biosynthesis; glycine from L-serine: step 1/1. Functionally, catalyzes the reversible interconversion of serine and glycine with tetrahydrofolate (THF) serving as the one-carbon carrier. This reaction serves as the major source of one-carbon groups required for the biosynthesis of purines, thymidylate, methionine, and other important biomolecules. Also exhibits THF-independent aldolase activity toward beta-hydroxyamino acids, producing glycine and aldehydes, via a retro-aldol mechanism. This chain is Serine hydroxymethyltransferase, found in Streptococcus suis (strain 98HAH33).